We begin with the raw amino-acid sequence, 211 residues long: Large ribosomal subunit protein bL25 (211 aa).

Belongs to the bacterial ribosomal protein bL25 family. CTC subfamily. Part of the 50S ribosomal subunit; part of the 5S rRNA/L5/L18/L25 subcomplex. Contacts the 5S rRNA. Binds to the 5S rRNA independently of L5 and L18.

This is one of the proteins that binds to the 5S RNA in the ribosome where it forms part of the central protuberance. This chain is Large ribosomal subunit protein bL25, found in Xanthomonas axonopodis pv. citri (strain 306).